Reading from the N-terminus, the 442-residue chain is Probable D-serine dehydratase (442 aa).

K111 is modified (N6-(pyridoxal phosphate)lysine).

This sequence belongs to the serine/threonine dehydratase family. DsdA subfamily. Pyridoxal 5'-phosphate is required as a cofactor.

The catalysed reaction is D-serine = pyruvate + NH4(+). In Sinorhizobium medicae (strain WSM419) (Ensifer medicae), this protein is Probable D-serine dehydratase.